We begin with the raw amino-acid sequence, 371 residues long: Peptide chain release factor 2 (371 aa).

Q252 carries the post-translational modification N5-methylglutamine.

It belongs to the prokaryotic/mitochondrial release factor family. Post-translationally, methylated by PrmC. Methylation increases the termination efficiency of RF2.

The protein localises to the cytoplasm. Its function is as follows. Peptide chain release factor 2 directs the termination of translation in response to the peptide chain termination codons UGA and UAA. This is Peptide chain release factor 2 from Staphylococcus epidermidis (strain ATCC 35984 / DSM 28319 / BCRC 17069 / CCUG 31568 / BM 3577 / RP62A).